The primary structure comprises 913 residues: Protein translocase subunit SecA (913 aa).

Residues Gln87, 105–109 (GEGKT), and Asp512 contribute to the ATP site. 4 residues coordinate Zn(2+): Cys897, Cys899, Cys908, and His909.

It belongs to the SecA family. As to quaternary structure, monomer and homodimer. Part of the essential Sec protein translocation apparatus which comprises SecA, SecYEG and auxiliary proteins SecDF-YajC and YidC. Requires Zn(2+) as cofactor.

The protein localises to the cell inner membrane. The protein resides in the cytoplasm. It catalyses the reaction ATP + H2O + cellular proteinSide 1 = ADP + phosphate + cellular proteinSide 2.. Part of the Sec protein translocase complex. Interacts with the SecYEG preprotein conducting channel. Has a central role in coupling the hydrolysis of ATP to the transfer of proteins into and across the cell membrane, serving both as a receptor for the preprotein-SecB complex and as an ATP-driven molecular motor driving the stepwise translocation of polypeptide chains across the membrane. The polypeptide is Protein translocase subunit SecA (Pseudomonas fluorescens (strain ATCC BAA-477 / NRRL B-23932 / Pf-5)).